Consider the following 412-residue polypeptide: Hyaluronidase-3 (412 aa).

An N-terminal signal peptide occupies residues 1–22; sequence MIMHLGLMMVVGLTLCLMHGQA. Disulfide bonds link C42–C332, C206–C221, C357–C368, C362–C396, and C398–C407. N-linked (GlcNAc...) asparagine glycosylation is present at N69. Catalysis depends on E129, which acts as the Proton donor. A glycan (N-linked (GlcNAc...) asparagine) is linked at N216. In terms of domain architecture, EGF-like spans 353–408; it reads AAMACSHQRCHGHGRCARKDPGQMEAFLHLQPDDSLGAWNSFRCHCYSGWAGPTCL.

Belongs to the glycosyl hydrolase 56 family. Post-translationally, N-glycosylated. As to expression, expressed in testis, epididymal tissue, epididymal luminal fluid (ELF), acrosome-intact (AI) sperm and caput (CAP), corpus (COR) and caudal (CAU) sperm. Higher expression in sperm than testis (at protein level). Liver, kidney, skin, brain, stomach and testis. Expressed mainly in granulosa cells of the ovaries. Expressed in small and large antral follicles. Not present in theca or stroma cells. Expressed in testis and liver. Expressed in testis and CAP, COR, and CAU epididymis tissue.

It is found in the secreted. Its subcellular location is the cell membrane. The protein localises to the cytoplasmic vesicle. The protein resides in the secretory vesicle. It localises to the acrosome. It is found in the endoplasmic reticulum. Its subcellular location is the early endosome. The enzyme catalyses Random hydrolysis of (1-&gt;4)-linkages between N-acetyl-beta-D-glucosamine and D-glucuronate residues in hyaluronate.. Functionally, facilitates sperm penetration into the layer of cumulus cells surrounding the egg by digesting hyaluronic acid. Involved in induction of the acrosome reaction in the sperm. Involved in follicular atresia, the breakdown of immature ovarian follicles that are not selected to ovulate. Induces ovarian granulosa cell apoptosis, possibly via apoptotic signaling pathway involving CASP8 and CASP3 activation, and poly(ADP-ribose) polymerase (PARP) cleavage. Has no hyaluronidase activity in embryonic fibroblasts in vitro. Has no hyaluronidase activity in granulosa cells in vitro. The protein is Hyaluronidase-3 (Hyal3) of Mus musculus (Mouse).